We begin with the raw amino-acid sequence, 185 residues long: Ribosome-recycling factor (185 aa).

The protein belongs to the RRF family.

It is found in the cytoplasm. In terms of biological role, responsible for the release of ribosomes from messenger RNA at the termination of protein biosynthesis. May increase the efficiency of translation by recycling ribosomes from one round of translation to another. This chain is Ribosome-recycling factor, found in Pseudothermotoga lettingae (strain ATCC BAA-301 / DSM 14385 / NBRC 107922 / TMO) (Thermotoga lettingae).